The chain runs to 554 residues: 3-(3-hydroxy-phenyl)propionate/3-hydroxycinnamic acid hydroxylase (554 aa).

Residues 17–46 (QVAI…VVEK) and 285–295 (FRIDRVLLAGD) contribute to the FAD site.

It belongs to the PheA/TfdB FAD monooxygenase family. Requires FAD as cofactor.

The catalysed reaction is 3-(3-hydroxyphenyl)propanoate + NADH + O2 + H(+) = 3-(2,3-dihydroxyphenyl)propanoate + NAD(+) + H2O. It carries out the reaction (2E)-3-(3-hydroxyphenyl)prop-2-enoate + NADH + O2 + H(+) = (2E)-3-(2,3-dihydroxyphenyl)prop-2-enoate + NAD(+) + H2O. The protein operates within aromatic compound metabolism; 3-phenylpropanoate degradation. Catalyzes the insertion of one atom of molecular oxygen into position 2 of the phenyl ring of 3-(3-hydroxyphenyl)propionate (3-HPP) and hydroxycinnamic acid (3HCI). This Escherichia coli O17:K52:H18 (strain UMN026 / ExPEC) protein is 3-(3-hydroxy-phenyl)propionate/3-hydroxycinnamic acid hydroxylase.